The primary structure comprises 211 residues: Redox-sensing transcriptional repressor Rex (211 aa).

Positions 17 to 56 (LYYRLVSILKGKGIDRVNSKTISEALQIDSATIRRDFSYF) form a DNA-binding region, H-T-H motif. 91-96 (GIGNLG) is an NAD(+) binding site.

Belongs to the transcriptional regulatory Rex family. As to quaternary structure, homodimer.

It is found in the cytoplasm. Its function is as follows. Modulates transcription in response to changes in cellular NADH/NAD(+) redox state. This chain is Redox-sensing transcriptional repressor Rex, found in Staphylococcus epidermidis (strain ATCC 12228 / FDA PCI 1200).